Consider the following 207-residue polypeptide: Large ribosomal subunit protein uL4 (207 aa).

Residues 44–81 (KRQGTQSAKTRSEVRGGGRKPWRQKGTGRARQGSIRSP) are disordered. Residues 60-71 (GGRKPWRQKGTG) are compositionally biased toward basic residues.

The protein belongs to the universal ribosomal protein uL4 family. As to quaternary structure, part of the 50S ribosomal subunit.

Functionally, one of the primary rRNA binding proteins, this protein initially binds near the 5'-end of the 23S rRNA. It is important during the early stages of 50S assembly. It makes multiple contacts with different domains of the 23S rRNA in the assembled 50S subunit and ribosome. Forms part of the polypeptide exit tunnel. This is Large ribosomal subunit protein uL4 from Finegoldia magna (strain ATCC 29328 / DSM 20472 / WAL 2508) (Peptostreptococcus magnus).